Consider the following 86-residue polypeptide: Large ribosomal subunit protein eL43 (86 aa).

Residues C38, C41, C56, and C59 each coordinate Zn(2+). The segment at 38–59 (CPVCGRKAVRRISTGIWQCQKC) adopts a C4-type zinc-finger fold.

Belongs to the eukaryotic ribosomal protein eL43 family. In terms of assembly, part of the 50S ribosomal subunit. The cofactor is Zn(2+).

The chain is Large ribosomal subunit protein eL43 from Thermococcus kodakarensis (strain ATCC BAA-918 / JCM 12380 / KOD1) (Pyrococcus kodakaraensis (strain KOD1)).